The sequence spans 412 residues: ATP phosphoribosyltransferase regulatory subunit (412 aa).

Belongs to the class-II aminoacyl-tRNA synthetase family. HisZ subfamily. In terms of assembly, heteromultimer composed of HisG and HisZ subunits.

It is found in the cytoplasm. Its pathway is amino-acid biosynthesis; L-histidine biosynthesis; L-histidine from 5-phospho-alpha-D-ribose 1-diphosphate: step 1/9. Required for the first step of histidine biosynthesis. May allow the feedback regulation of ATP phosphoribosyltransferase activity by histidine. The protein is ATP phosphoribosyltransferase regulatory subunit of Dehalococcoides mccartyi (strain ATCC BAA-2266 / KCTC 15142 / 195) (Dehalococcoides ethenogenes (strain 195)).